The following is a 251-amino-acid chain: Ribosomal RNA small subunit methyltransferase J (251 aa).

S-adenosyl-L-methionine contacts are provided by residues Arg100–Asp101, Glu116–Arg117, and Asp170.

Belongs to the methyltransferase superfamily. RsmJ family.

It localises to the cytoplasm. It catalyses the reaction guanosine(1516) in 16S rRNA + S-adenosyl-L-methionine = N(2)-methylguanosine(1516) in 16S rRNA + S-adenosyl-L-homocysteine + H(+). Functionally, specifically methylates the guanosine in position 1516 of 16S rRNA. This is Ribosomal RNA small subunit methyltransferase J from Haemophilus ducreyi (strain 35000HP / ATCC 700724).